The sequence spans 303 residues: Probable cell division protein WhiA (303 aa).

A DNA-binding region (H-T-H motif) is located at residues 272–303; sequence SIQQLADSLSTPLTKSGVNHRLRKINKIADEL.

The protein belongs to the WhiA family.

Its function is as follows. Involved in cell division and chromosome segregation. The chain is Probable cell division protein WhiA from Streptococcus pneumoniae serotype 2 (strain D39 / NCTC 7466).